The following is a 489-amino-acid chain: Betaine aldehyde dehydrogenase (489 aa).

2 residues coordinate K(+): T26 and D93. Position 150-152 (G150–W152) interacts with NAD(+). K162 acts as the Charge relay system in catalysis. K176–E179 is an NAD(+) binding site. V180 contributes to the K(+) binding site. G229 to T232 is an NAD(+) binding site. L245 serves as a coordination point for K(+). The active-site Proton acceptor is the E251. 3 residues coordinate NAD(+): G253, C285, and E386. C285 functions as the Nucleophile in the catalytic mechanism. The residue at position 285 (C285) is a Cysteine sulfenic acid (-SOH). The K(+) site is built by K456 and G459. E463 functions as the Charge relay system in the catalytic mechanism.

The protein belongs to the aldehyde dehydrogenase family. Dimer of dimers. It depends on K(+) as a cofactor.

It carries out the reaction betaine aldehyde + NAD(+) + H2O = glycine betaine + NADH + 2 H(+). It participates in amine and polyamine biosynthesis; betaine biosynthesis via choline pathway; betaine from betaine aldehyde: step 1/1. In terms of biological role, involved in the biosynthesis of the osmoprotectant glycine betaine. Catalyzes the irreversible oxidation of betaine aldehyde to the corresponding acid. The chain is Betaine aldehyde dehydrogenase from Burkholderia cenocepacia (strain ATCC BAA-245 / DSM 16553 / LMG 16656 / NCTC 13227 / J2315 / CF5610) (Burkholderia cepacia (strain J2315)).